The sequence spans 147 residues: Large ribosomal subunit protein uL13 (147 aa).

This sequence belongs to the universal ribosomal protein uL13 family. Part of the 50S ribosomal subunit.

This protein is one of the early assembly proteins of the 50S ribosomal subunit, although it is not seen to bind rRNA by itself. It is important during the early stages of 50S assembly. The chain is Large ribosomal subunit protein uL13 from Polaromonas naphthalenivorans (strain CJ2).